Reading from the N-terminus, the 280-residue chain is Fructose-1,6-bisphosphatase class 1 (280 aa).

Mg(2+) contacts are provided by Glu-64, Asp-83, Leu-85, and Asp-86. Substrate is bound by residues 86–89 (DGSS), Tyr-189, and Lys-220. A Mg(2+)-binding site is contributed by Glu-226.

This sequence belongs to the FBPase class 1 family. As to quaternary structure, homotetramer. Mg(2+) serves as cofactor.

Its subcellular location is the cytoplasm. The enzyme catalyses beta-D-fructose 1,6-bisphosphate + H2O = beta-D-fructose 6-phosphate + phosphate. It participates in carbohydrate biosynthesis; gluconeogenesis. This Campylobacter jejuni subsp. jejuni serotype O:23/36 (strain 81-176) protein is Fructose-1,6-bisphosphatase class 1.